A 182-amino-acid chain; its full sequence is ATP synthase subunit delta (182 aa).

Belongs to the ATPase delta chain family. F-type ATPases have 2 components, F(1) - the catalytic core - and F(0) - the membrane proton channel. F(1) has five subunits: alpha(3), beta(3), gamma(1), delta(1), epsilon(1). CF(0) has four main subunits: a(1), b(1), b'(1) and c(10-14). The alpha and beta chains form an alternating ring which encloses part of the gamma chain. F(1) is attached to F(0) by a central stalk formed by the gamma and epsilon chains, while a peripheral stalk is formed by the delta, b and b' chains.

It is found in the cellular thylakoid membrane. F(1)F(0) ATP synthase produces ATP from ADP in the presence of a proton or sodium gradient. F-type ATPases consist of two structural domains, F(1) containing the extramembraneous catalytic core and F(0) containing the membrane proton channel, linked together by a central stalk and a peripheral stalk. During catalysis, ATP synthesis in the catalytic domain of F(1) is coupled via a rotary mechanism of the central stalk subunits to proton translocation. In terms of biological role, this protein is part of the stalk that links CF(0) to CF(1). It either transmits conformational changes from CF(0) to CF(1) or is implicated in proton conduction. The sequence is that of ATP synthase subunit delta from Prochlorococcus marinus (strain MIT 9303).